We begin with the raw amino-acid sequence, 353 residues long: Serine/threonine-protein phosphatase 2A activator 1 (353 aa).

The disordered stretch occupies residues 331 to 353 (ANNATTKMPPPLSTSTSRFIHRR). A compositionally biased stretch (polar residues) spans 343–353 (STSTSRFIHRR).

This sequence belongs to the PTPA-type PPIase family.

The protein localises to the cytoplasm. It is found in the nucleus. It carries out the reaction [protein]-peptidylproline (omega=180) = [protein]-peptidylproline (omega=0). Its function is as follows. PPIases accelerate the folding of proteins. It catalyzes the cis-trans isomerization of proline imidic peptide bonds in oligopeptides. Acts as a regulatory subunit for PP2A-like phosphatases modulating their activity or substrate specificity, probably by inducing a conformational change in the catalytic subunit, a direct target of the PPIase. Can reactivate inactive phosphatase PP2A-phosphatase methylesterase complexes (PP2Ai) in presence of ATP and Mg(2+) by dissociating the inactive form from the complex. The sequence is that of Serine/threonine-protein phosphatase 2A activator 1 (RRD1) from Kluyveromyces lactis (strain ATCC 8585 / CBS 2359 / DSM 70799 / NBRC 1267 / NRRL Y-1140 / WM37) (Yeast).